The sequence spans 403 residues: Tryptophan 2,3-dioxygenase (403 aa).

Residue 69 to 73 participates in substrate binding; the sequence is FIVIH. The short motif at 133 to 135 is the PLD motif; required for enzymatic activity element; that stretch reads PLD. R140 provides a ligand contact to substrate. H327 serves as a coordination point for heme. Residue T341 participates in substrate binding.

Belongs to the tryptophan 2,3-dioxygenase family. In terms of assembly, homotetramer. Dimer of dimers. Heme is required as a cofactor. As to expression, expressed in body wall muscle cells, hypodermis, PLM neurons and touch-receptor neurons.

The enzyme catalyses L-tryptophan + O2 = N-formyl-L-kynurenine. It functions in the pathway amino-acid degradation; L-tryptophan degradation via kynurenine pathway; L-kynurenine from L-tryptophan: step 1/2. Functionally, heme-dependent dioxygenase that catalyzes the oxidative cleavage of the L-tryptophan (L-Trp) pyrrole ring and converts L-tryptophan to N-formyl-L-kynurenine. Catalyzes the oxidative cleavage of the indole moiety. Involved in regulation of protein homeostasis, longevity and reproducive life span. Specifically regulates proteotoxicity due to age-related aggregation of proteins like alpha-synuclein, via its effects on tryptophan metabolism. This Caenorhabditis elegans protein is Tryptophan 2,3-dioxygenase.